Consider the following 374-residue polypeptide: tRNA-specific 2-thiouridylase MnmA (374 aa).

ATP is bound by residues Gly12–Ser19 and Met38. Residues Asn98–Asp100 are interaction with target base in tRNA. The active-site Nucleophile is the Cys103. Cys103 and Cys202 are disulfide-bonded. Gly128 lines the ATP pocket. The tract at residues Lys152–Gln154 is interaction with tRNA. The active-site Cysteine persulfide intermediate is Cys202. Positions Arg316–Tyr317 are interaction with tRNA.

Belongs to the MnmA/TRMU family.

The protein localises to the cytoplasm. It carries out the reaction S-sulfanyl-L-cysteinyl-[protein] + uridine(34) in tRNA + AH2 + ATP = 2-thiouridine(34) in tRNA + L-cysteinyl-[protein] + A + AMP + diphosphate + H(+). Functionally, catalyzes the 2-thiolation of uridine at the wobble position (U34) of tRNA, leading to the formation of s(2)U34. The sequence is that of tRNA-specific 2-thiouridylase MnmA from Vibrio parahaemolyticus serotype O3:K6 (strain RIMD 2210633).